An 887-amino-acid chain; its full sequence is Probable LRR receptor-like serine/threonine-protein kinase At5g59680 (887 aa).

The first 23 residues, 1-23 (MERSLELLLLLIRTLAIIHISQA), serve as a signal peptide directing secretion. Residues 25–510 (SQQGFISLDC…TKSGKSFPVT (486 aa)) are Extracellular-facing. N-linked (GlcNAc...) asparagine glycans are attached at residues asparagine 143, asparagine 230, asparagine 256, asparagine 289, asparagine 338, asparagine 363, asparagine 400, asparagine 416, asparagine 432, asparagine 445, asparagine 464, and asparagine 471. 3 LRR repeats span residues 411 to 434 (RITT…QNLT), 435 to 457 (TLEK…LSNM), and 459 to 481 (SLLV…LQRK). A helical transmembrane segment spans residues 511–531 (IVASVGSAAILIVVLVLVLFL). At 532–887 (RKKKPSAVEV…FDAEMIPRAR (356 aa)) the chain is on the cytoplasmic side. Residue threonine 571 is modified to Phosphothreonine. In terms of domain architecture, Protein kinase spans 580 to 853 (NNFGRVVGEG…HVVIELKECL (274 aa)). ATP contacts are provided by residues 586–594 (VGEGGFGVV) and lysine 608. A Phosphotyrosine modification is found at tyrosine 653. Aspartate 705 serves as the catalytic Proton acceptor. Serine 739 is subject to Phosphoserine. Residues threonine 740 and threonine 745 each carry the phosphothreonine modification. Position 753 is a phosphotyrosine (tyrosine 753).

Belongs to the protein kinase superfamily. Ser/Thr protein kinase family.

The protein localises to the membrane. The catalysed reaction is L-seryl-[protein] + ATP = O-phospho-L-seryl-[protein] + ADP + H(+). It carries out the reaction L-threonyl-[protein] + ATP = O-phospho-L-threonyl-[protein] + ADP + H(+). The sequence is that of Probable LRR receptor-like serine/threonine-protein kinase At5g59680 from Arabidopsis thaliana (Mouse-ear cress).